A 133-amino-acid polypeptide reads, in one-letter code: Small ribosomal subunit protein uS8 (133 aa).

Belongs to the universal ribosomal protein uS8 family. As to quaternary structure, part of the 30S ribosomal subunit. Contacts proteins S5 and S12.

In terms of biological role, one of the primary rRNA binding proteins, it binds directly to 16S rRNA central domain where it helps coordinate assembly of the platform of the 30S subunit. The polypeptide is Small ribosomal subunit protein uS8 (Syntrophus aciditrophicus (strain SB)).